Here is a 523-residue protein sequence, read N- to C-terminus: Cytidine and dCMP deaminase domain-containing protein 1 (523 aa).

The span at 1–11 shows a compositional bias: polar residues; the sequence is MKETDQMQSLE. 2 disordered regions span residues 1-27 and 55-81; these read MKET…GSMT and QGQK…RVST. In terms of domain architecture, CMP/dCMP-type deaminase 1 spans 71-169; sequence GDNEELTRVS…SLLTEASSSE (99 aa). Zn(2+) contacts are provided by histidine 110, cysteine 135, and cysteine 138. The short motif at 272–284 is the Nuclear export signal element; the sequence is NLRQNMKDLILLL. The CMP/dCMP-type deaminase 2 domain maps to 318 to 483; it reads EVARHCMVQA…LNPSEAYSLD (166 aa). Histidine 399 lines the Zn(2+) pocket. Glutamate 401 functions as the Proton donor in the catalytic mechanism. Residues cysteine 427 and cysteine 430 each contribute to the Zn(2+) site. Positions 478–523 are disordered; that stretch reads EAYSLDPNEPERRENGVLRRRSAKDEQRSSKRPRLETRSAGRATLQ. The span at 486-516 shows a compositional bias: basic and acidic residues; sequence EPERRENGVLRRRSAKDEQRSSKRPRLETRS. The Bipartite nuclear localization signal signature appears at 489 to 511; the sequence is RRENGVLRRRSAKDEQRSSKRPR.

Belongs to the cytidine and deoxycytidylate deaminase family. Zn(2+) is required as a cofactor.

The protein localises to the cytoplasm. The protein resides in the nucleus. The catalysed reaction is 2'-deoxycytidine + H2O + H(+) = 2'-deoxyuridine + NH4(+). It catalyses the reaction cytidine + H2O + H(+) = uridine + NH4(+). Functionally, catalyzes the deamination of cytidine and deoxycytidine into uridine and deoxyuridine, respectively. May play an important role in testicular development and spermatogenesis. This is Cytidine and dCMP deaminase domain-containing protein 1 (Cdadc1) from Mus musculus (Mouse).